Consider the following 329-residue polypeptide: UDP-sugar transporter sqv-7 (329 aa).

9 helical membrane passes run 15–34, 41–63, 86–108, 129–151, 155–174, 187–209, 224–246, 253–275, and 280–302; these read SAVF…KILL, SFLF…AKMF, YFFN…FTVL, SKAV…IYDL, ALGY…LGVY, YGLM…QYTG, TSSV…YSLV, SALT…GMFS, and VFQW…YTYV.

This sequence belongs to the TPT transporter family. SLC35D subfamily.

The protein resides in the golgi apparatus membrane. In terms of biological role, acts as a transporter of UDP-glucuronic acid (UDP-GlcA), UDP-N-acetylgalactosamine (UDP-GalNAc) and UDP-galactose (UDP-Gal) from the cytoplasm into the Golgi lumen. Involved in the biosynthesis of glycoconjugates that play a pivotal role in development. Involved in the synthesis of chondroitin sulfate and heparan sulfate proteoglycans. Required for embryonic development. Involved in vulva epithelium invagination and embryonic development. Involved in the directed migration of hermaphrodite-specific neurons. The chain is UDP-sugar transporter sqv-7 (sqv-7) from Caenorhabditis elegans.